We begin with the raw amino-acid sequence, 561 residues long: Foot protein 1 variant 1 (561 aa).

The first 20 residues, 1 to 20, serve as a signal peptide directing secretion; the sequence is MARNMNILTLFAVLIGSASA. Residue Y22 is modified to 3',4'-dihydroxyphenylalanine. 4-hydroxyproline is present on P33. The stretch at 41–50 is one A-1; approximate repeat; sequence VHPPAWTAWK. The segment at 41–410 is 13 X 10 AA A-P-P-P-A-W-T-A-W-K; sequence VHPPAWTAWK…APPPAWTAWK (370 aa). W46, W49, W56, and W59 each carry 7'-hydroxytryptophan. Residues W46, W49, W56, and W59 are each glycosylated (C-linked (Man) hydroxytryptophan). One copy of the A-2; approximate repeat lies at 51 to 60; that stretch reads AHPPAWTAWK. A B-1 repeat occupies 61-70; that stretch reads ATPKPWTAWK. Residues 61 to 440 are 27 X 10 AA A-T-P-K-P-W-T-A-W-K; the sequence is ATPKPWTAWK…ATPKPWTAWR (380 aa). P65 is subject to 4-hydroxyproline. W66 is a glycosylation site (C-linked (Man) tryptophan). W69 is subject to 7'-hydroxytryptophan. W69 carries a C-linked (Man) hydroxytryptophan glycan. Residues 71–80 form an A-3 repeat; the sequence is APPPAWTAWK. 4-hydroxyproline is present on residues P72, P73, and P74. W76 and W79 each carry 7'-hydroxytryptophan. C-linked (Man) hydroxytryptophan glycosylation is found at W76 and W79. Residues 81 to 90 form a B-2 repeat; sequence ATPKPWTAWK. P85 is modified (4-hydroxyproline). W86 is a glycosylation site (C-linked (Man) tryptophan). The residue at position 89 (W89) is a 7'-hydroxytryptophan. W89 is a glycosylation site (C-linked (Man) hydroxytryptophan). The stretch at 91-100 is one A-4; approximate repeat; it reads APPPTWTAWK. 4-hydroxyproline is present on residues P92, P93, and P94. W96 and W99 each carry 7'-hydroxytryptophan. Residues W96 and W99 are each glycosylated (C-linked (Man) hydroxytryptophan). The B-3 repeat unit spans residues 101–110; that stretch reads ATPKPWTAWK. 4-hydroxyproline is present on P105. W106 carries a C-linked (Man) tryptophan glycan. A 7'-hydroxytryptophan modification is found at W109. C-linked (Man) hydroxytryptophan glycosylation is present at W109. Residues 111–120 form an A-5 repeat; sequence APPPAWTAWK. A 4-hydroxyproline mark is found at P112, P113, and P114. 7'-hydroxytryptophan occurs at positions 116 and 119. W116 and W119 each carry a C-linked (Man) hydroxytryptophan glycan. The stretch at 121–130 is one B-4; approximate repeat; the sequence is ATLKPWTAWK. 4-hydroxyproline is present on P125. W126 carries C-linked (Man) tryptophan glycosylation. W129 carries the 7'-hydroxytryptophan modification. A C-linked (Man) hydroxytryptophan glycan is attached at W129. A B-5 repeat occupies 131-140; that stretch reads ATPKPWTAWK. Residue P135 is modified to 4-hydroxyproline. W136 is a glycosylation site (C-linked (Man) tryptophan). W139 is subject to 7'-hydroxytryptophan. W139 carries C-linked (Man) hydroxytryptophan glycosylation. Residues 141–150 form a B-6 repeat; that stretch reads ATPKPWTAWK. A 4-hydroxyproline modification is found at P145. Residue W146 is glycosylated (C-linked (Man) tryptophan). A 7'-hydroxytryptophan modification is found at W149. C-linked (Man) hydroxytryptophan glycosylation occurs at W149. A B-7 repeat occupies 151–160; it reads ATPKPWTAWK. P155 carries the post-translational modification 4-hydroxyproline. W156 carries a C-linked (Man) tryptophan glycan. Position 159 is a 7'-hydroxytryptophan (W159). Residue W159 is glycosylated (C-linked (Man) hydroxytryptophan). The stretch at 161-170 is one B-8 repeat; sequence ATPKPWTAWK. Position 165 is a 4-hydroxyproline (P165). A glycan (C-linked (Man) tryptophan) is linked at W166. W169 is modified (7'-hydroxytryptophan). W169 carries a C-linked (Man) hydroxytryptophan glycan. The B-9; approximate repeat unit spans residues 171–180; sequence ATPKPWTVWK. At P175 the chain carries 4-hydroxyproline. A glycan (C-linked (Man) tryptophan) is linked at W176. W179 carries the 7'-hydroxytryptophan modification. A glycan (C-linked (Man) hydroxytryptophan) is linked at W179. One copy of the B-10 repeat lies at 181–190; that stretch reads ATPKPWTAWK. P185 is subject to 4-hydroxyproline. W186 carries C-linked (Man) tryptophan glycosylation. W189 is subject to 7'-hydroxytryptophan. W189 carries a C-linked (Man) hydroxytryptophan glycan. One copy of the B-11 repeat lies at 191-200; that stretch reads ATPKPWTAWK. P195 is subject to 4-hydroxyproline. W196 is a glycosylation site (C-linked (Man) tryptophan). W199 carries the 7'-hydroxytryptophan modification. A glycan (C-linked (Man) hydroxytryptophan) is linked at W199. The A-6; approximate repeat unit spans residues 201–210; sequence APPPAWSAWK. P202, P203, and P204 each carry 4-hydroxyproline. Residues W206 and W209 each carry the 7'-hydroxytryptophan modification. C-linked (Man) hydroxytryptophan glycans are attached at residues W206 and W209. The stretch at 211-220 is one B-12; approximate repeat; the sequence is ATPKPWTVWK. P215 is modified (4-hydroxyproline). W216 is a glycosylation site (C-linked (Man) tryptophan). At W219 the chain carries 7'-hydroxytryptophan. W219 carries a C-linked (Man) hydroxytryptophan glycan. One copy of the B-13 repeat lies at 221-230; sequence ATPKPWTAWK. Residue P225 is modified to 4-hydroxyproline. W226 carries C-linked (Man) tryptophan glycosylation. W229 carries the 7'-hydroxytryptophan modification. A C-linked (Man) hydroxytryptophan glycan is attached at W229. The B-14 repeat unit spans residues 231–240; that stretch reads ATPKPWTAWK. P235 is modified (4-hydroxyproline). W236 is a glycosylation site (C-linked (Man) tryptophan). W239 is modified (7'-hydroxytryptophan). C-linked (Man) hydroxytryptophan glycosylation occurs at W239. Residues 241 to 250 form a B-15; approximate repeat; sequence ATPKPWTVWK. P245 is subject to 4-hydroxyproline. C-linked (Man) tryptophan glycosylation occurs at W246. W249 carries the 7'-hydroxytryptophan modification. W249 is a glycosylation site (C-linked (Man) hydroxytryptophan). One copy of the B-16 repeat lies at 251–260; the sequence is ATPKPWTAWK. P255 bears the 4-hydroxyproline mark. Residue W256 is glycosylated (C-linked (Man) tryptophan). At W259 the chain carries 7'-hydroxytryptophan. C-linked (Man) hydroxytryptophan glycosylation is present at W259. The A-7 repeat unit spans residues 261-270; it reads APPPAWTAWK. 3 positions are modified to 4-hydroxyproline: P262, P263, and P264. Residues W266 and W269 each carry the 7'-hydroxytryptophan modification. 2 C-linked (Man) hydroxytryptophan glycosylation sites follow: W266 and W269. A B-17 repeat occupies 271-280; sequence ATPKPWTAWK. P275 carries the post-translational modification 4-hydroxyproline. The C-linked (Man) tryptophan glycan is linked to W276. W279 is modified (7'-hydroxytryptophan). The C-linked (Man) hydroxytryptophan glycan is linked to W279. Residues 281–290 form an A-8; approximate repeat; sequence APPPTWTAWK. Residues P282, P283, and P284 each carry the 4-hydroxyproline modification. A 7'-hydroxytryptophan mark is found at W286 and W289. 2 C-linked (Man) hydroxytryptophan glycosylation sites follow: W286 and W289. A B-18 repeat occupies 291 to 300; the sequence is ATPKPWTAWK. P295 carries the 4-hydroxyproline modification. W296 is a glycosylation site (C-linked (Man) tryptophan). Residue W299 is modified to 7'-hydroxytryptophan. A C-linked (Man) hydroxytryptophan glycan is attached at W299. The stretch at 301-310 is one A-9; approximate repeat; it reads APPPAWSAWK. A 4-hydroxyproline mark is found at P302, P303, and P304. Residues W306 and W309 each carry the 7'-hydroxytryptophan modification. W306 and W309 each carry a C-linked (Man) hydroxytryptophan glycan. A B-19 repeat occupies 311-320; sequence ATPKPWTAWK. P315 is subject to 4-hydroxyproline. C-linked (Man) tryptophan glycosylation is present at W316. W319 carries the post-translational modification 7'-hydroxytryptophan. A glycan (C-linked (Man) hydroxytryptophan) is linked at W319. One copy of the B-20 repeat lies at 321–330; sequence ATPKPWTAWK. P325 carries the post-translational modification 4-hydroxyproline. Residue W326 is glycosylated (C-linked (Man) tryptophan). A 7'-hydroxytryptophan modification is found at W329. C-linked (Man) hydroxytryptophan glycosylation occurs at W329. The stretch at 331-340 is one B-21 repeat; sequence ATPKPWTAWK. P335 carries the post-translational modification 4-hydroxyproline. A glycan (C-linked (Man) tryptophan) is linked at W336. A 7'-hydroxytryptophan modification is found at W339. W339 carries C-linked (Man) hydroxytryptophan glycosylation. A B-22 repeat occupies 341-350; sequence ATPKPWTAWK. Residue P345 is modified to 4-hydroxyproline. C-linked (Man) tryptophan glycosylation occurs at W346. Residue W349 is modified to 7'-hydroxytryptophan. W349 is a glycosylation site (C-linked (Man) hydroxytryptophan). The A-10; approximate repeat unit spans residues 351–360; sequence VPPPAWTAWK. Residues P352, P353, and P354 each carry the 4-hydroxyproline modification. W356, W359, W366, and W369 each carry 7'-hydroxytryptophan. 4 C-linked (Man) hydroxytryptophan glycosylation sites follow: W356, W359, W366, and W369. Residues 361–370 form an A-11; approximate repeat; it reads AHPPAWTAWK. Residues 371–380 form a B-23 repeat; sequence ATPKPWTAWK. Residue P375 is modified to 4-hydroxyproline. A glycan (C-linked (Man) tryptophan) is linked at W376. W379 bears the 7'-hydroxytryptophan mark. Residue W379 is glycosylated (C-linked (Man) hydroxytryptophan). The stretch at 381 to 390 is one A-12 repeat; that stretch reads APPPAWTAWK. 4-hydroxyproline occurs at positions 382, 383, and 384. Residues W386 and W389 each carry the 7'-hydroxytryptophan modification. Residues W386 and W389 are each glycosylated (C-linked (Man) hydroxytryptophan). Residues 391–400 form a B-24 repeat; the sequence is ATPKPWTAWK. Position 395 is a 4-hydroxyproline (P395). C-linked (Man) tryptophan glycosylation is present at W396. W399 carries the 7'-hydroxytryptophan modification. W399 is a glycosylation site (C-linked (Man) hydroxytryptophan). The stretch at 401 to 410 is one A-13 repeat; it reads APPPAWTAWK. P402, P403, and P404 each carry 4-hydroxyproline. W406 and W409 each carry 7'-hydroxytryptophan. 2 C-linked (Man) hydroxytryptophan glycosylation sites follow: W406 and W409. One copy of the B-25 repeat lies at 411–420; the sequence is ATPKPWTAWK. The residue at position 415 (P415) is a 4-hydroxyproline. The C-linked (Man) tryptophan glycan is linked to W416. The residue at position 419 (W419) is a 7'-hydroxytryptophan. W419 is a glycosylation site (C-linked (Man) hydroxytryptophan). One copy of the B-26; approximate repeat lies at 421 to 430; sequence ATPKPWTVWK. Position 425 is a 4-hydroxyproline (P425). C-linked (Man) tryptophan glycosylation occurs at W426. At W429 the chain carries 7'-hydroxytryptophan. C-linked (Man) hydroxytryptophan glycosylation is present at W429. A B-27; approximate repeat occupies 431-440; sequence ATPKPWTAWR. A 4-hydroxyproline modification is found at P435. W436 carries a C-linked (Man) tryptophan glycan. W439 bears the 7'-hydroxytryptophan mark. W439 carries C-linked (Man) hydroxytryptophan glycosylation. The disordered stretch occupies residues 452–507; that stretch reads GHGYGGYGKPGKPGKPGSKGPRGPAGPPGATGKTGRTGATGKRGPPGYPGKPGVPG. The span at 453–462 shows a compositional bias: gly residues; the sequence is HGYGGYGKPG. Positions 459 to 510 constitute a Collagen-like domain; the sequence is GKPGKPGKPGSKGPRGPAGPPGATGKTGRTGATGKRGPPGYPGKPGVPGRNG. Residues 466 to 496 show a composition bias toward low complexity; the sequence is KPGSKGPRGPAGPPGATGKTGRTGATGKRGP. 3 positions are modified to 4-hydroxyproline: P497, P500, and P506.

In terms of tissue distribution, produced by the byssal gland.

It localises to the secreted. Functionally, provides adhesiveness to the mussel's foot. Mussels produce one of the strongest water insoluble glues. The mussel's adhesive is a bundle of threads, called a byssus, formed by a fibrous collagenous core coated with adhesive proteins. The sequence is that of Foot protein 1 variant 1 from Perna viridis (Asian green mussel).